The chain runs to 235 residues: Phosphatidylserine decarboxylase proenzyme (235 aa).

The active-site Schiff-base intermediate with substrate; via pyruvic acid is Ser-204. Pyruvic acid (Ser); by autocatalysis is present on Ser-204.

Belongs to the phosphatidylserine decarboxylase family. PSD-A subfamily. In terms of assembly, heterodimer of a large membrane-associated beta subunit and a small pyruvoyl-containing alpha subunit. Requires pyruvate as cofactor. Post-translationally, is synthesized initially as an inactive proenzyme. Formation of the active enzyme involves a self-maturation process in which the active site pyruvoyl group is generated from an internal serine residue via an autocatalytic post-translational modification. Two non-identical subunits are generated from the proenzyme in this reaction, and the pyruvate is formed at the N-terminus of the alpha chain, which is derived from the carboxyl end of the proenzyme. The post-translation cleavage follows an unusual pathway, termed non-hydrolytic serinolysis, in which the side chain hydroxyl group of the serine supplies its oxygen atom to form the C-terminus of the beta chain, while the remainder of the serine residue undergoes an oxidative deamination to produce ammonia and the pyruvoyl prosthetic group on the alpha chain.

Its subcellular location is the cell membrane. The catalysed reaction is a 1,2-diacyl-sn-glycero-3-phospho-L-serine + H(+) = a 1,2-diacyl-sn-glycero-3-phosphoethanolamine + CO2. It participates in phospholipid metabolism; phosphatidylethanolamine biosynthesis; phosphatidylethanolamine from CDP-diacylglycerol: step 2/2. Catalyzes the formation of phosphatidylethanolamine (PtdEtn) from phosphatidylserine (PtdSer). The protein is Phosphatidylserine decarboxylase proenzyme of Mycobacterium sp. (strain KMS).